The chain runs to 65 residues: Large ribosomal subunit protein bL32 (65 aa).

Over residues 1 to 18 (MAVPKRRHSKSRTRKRRS) the composition is skewed to basic residues. Residues 1 to 20 (MAVPKRRHSKSRTRKRRSTY) form a disordered region.

Belongs to the bacterial ribosomal protein bL32 family.

The protein is Large ribosomal subunit protein bL32 of Salinibacter ruber (strain DSM 13855 / M31).